We begin with the raw amino-acid sequence, 353 residues long: MVDTHKLADDVLHLLDNRIEDNYRVCVILVGSPGSGKSTIAEELCQIINEKYHTFLSEHPNVIEVNDRLKPMVNLVDSLKTLQPNEVAEMIENQGLFKDHVEDVNFQPIKYSALTSNNEECTAVVARGGTANAIRIATVDNPVNVNKLAQDSINIAQIVPMDGFHLSRRCLDLFKDPQTAHKRRGSPSTFDSNNFLQLCKILAKTSLCKVSSHHKFYSTSSVFEKLSKTFSQTIPDIFVPGFNHALKDPTPDQYCISKFTRIVILEGLYLLYDQENWKKIYKTLADTGALLVYKIDIDYEATEERVAKRHLQSGLVTTIAEGREKFRSNDLLNGRDIDNHLIKVDNIVHIRND.

ATP is bound at residue 31 to 39 (GSPGSGKST).

This sequence belongs to the YFH7 family.

ATP-dependent kinase that could be involved in endoplasmic reticulum membrane assembly. The protein is ATP-dependent kinase YFH7 (YFH7) of Saccharomyces cerevisiae (strain Lalvin EC1118 / Prise de mousse) (Baker's yeast).